The primary structure comprises 57 residues: Large ribosomal subunit protein bL32c (57 aa).

This sequence belongs to the bacterial ribosomal protein bL32 family.

It is found in the plastid. It localises to the chloroplast. The protein is Large ribosomal subunit protein bL32c of Amborella trichopoda.